The sequence spans 51 residues: Large ribosomal subunit protein eL39 (51 aa).

The protein belongs to the eukaryotic ribosomal protein eL39 family.

The sequence is that of Large ribosomal subunit protein eL39 from Methanosarcina barkeri (strain Fusaro / DSM 804).